We begin with the raw amino-acid sequence, 296 residues long: MSSLRQIAFYGKGGIGKSTTSQNTLAALAEMGHRILIVGCDPKADSTRLILHAKAQDTILSLAAAAGSVEDLELEEVMKIGYRDIRCVESGGPEPGVGCAGRGVITSINFLEENGAYEDIDYVSYDVLGDVVCGGFAMPIRENKAQEIYIVMSGEMMAMYAANNISKGILKYANSGGVRLGGLVCNERQTDKELELAENLAKKLGTQLIYFVPRDNIVQHAELRRMTVIEYAPDSVQANHYRNLAERVHNNGGKGIIPTPITMDELEDMLMEHGIMKTVDESQVGKTAAELAALSA.

Residue 11 to 18 (GKGGIGKS) participates in ATP binding. C99 provides a ligand contact to [4Fe-4S] cluster. Position 102 is an ADP-ribosylarginine; by dinitrogenase reductase ADP-ribosyltransferase (R102). C133 lines the [4Fe-4S] cluster pocket.

The protein belongs to the NifH/BchL/ChlL family. Homodimer. [4Fe-4S] cluster serves as cofactor. Post-translationally, the reversible ADP-ribosylation of Arg-102 inactivates the nitrogenase reductase and regulates nitrogenase activity.

The enzyme catalyses N2 + 8 reduced [2Fe-2S]-[ferredoxin] + 16 ATP + 16 H2O = H2 + 8 oxidized [2Fe-2S]-[ferredoxin] + 2 NH4(+) + 16 ADP + 16 phosphate + 6 H(+). Functionally, the key enzymatic reactions in nitrogen fixation are catalyzed by the nitrogenase complex, which has 2 components: the iron protein and the molybdenum-iron protein. The sequence is that of Nitrogenase iron protein 2 (nifH2) from Azorhizobium caulinodans (strain ATCC 43989 / DSM 5975 / JCM 20966 / LMG 6465 / NBRC 14845 / NCIMB 13405 / ORS 571).